The chain runs to 457 residues: Cysteine--tRNA ligase (457 aa).

Cys-31 contributes to the Zn(2+) binding site. Residues 33 to 43 (PTVYNYAHIGN) carry the 'HIGH' region motif. Zn(2+) is bound by residues Cys-211, His-236, and Glu-240. A 'KMSKS' region motif is present at residues 269 to 273 (KMSKS). Lys-272 contributes to the ATP binding site.

It belongs to the class-I aminoacyl-tRNA synthetase family. Monomer. The cofactor is Zn(2+).

It localises to the cytoplasm. It catalyses the reaction tRNA(Cys) + L-cysteine + ATP = L-cysteinyl-tRNA(Cys) + AMP + diphosphate. The polypeptide is Cysteine--tRNA ligase (Xanthomonas campestris pv. campestris (strain ATCC 33913 / DSM 3586 / NCPPB 528 / LMG 568 / P 25)).